Here is a 631-residue protein sequence, read N- to C-terminus: Probable methyltransferase PMT16 (631 aa).

Residues 1–14 (MNLFTRISSRTKKA) are Cytoplasmic-facing. A helical; Signal-anchor for type II membrane protein membrane pass occupies residues 15-35 (NLYYVTLVALLCIASYLLGIW). Residues 36–631 (QNTAVNPRAA…EDKNNTSALS (596 aa)) lie on the Lumenal side of the membrane. Residues N61, N230, and N626 are each glycosylated (N-linked (GlcNAc...) asparagine).

The protein belongs to the methyltransferase superfamily.

It localises to the endoplasmic reticulum membrane. The polypeptide is Probable methyltransferase PMT16 (Arabidopsis thaliana (Mouse-ear cress)).